A 387-amino-acid chain; its full sequence is Postreplication repair E3 ubiquitin-protein ligase rad18 (387 aa).

An RING-type zinc finger spans residues 29–67 (CLICHEYFRAPLITSCSHTFCSFCIRDYLREHPMCPACR). The interval 119–153 (DSASGDEEWEDDLASNSSPASIAKKTSRDSKKRKR) is disordered. Positions 122 to 131 (SGDEEWEDDL) are enriched in acidic residues. The segment at 156–183 (LVHCPACSNLVPHNQINQHLDSCLNSPS) adopts a UBZ4-type zinc-finger fold. Residues Cys-159, Cys-162, His-174, and Cys-178 each coordinate Zn(2+). The disordered stretch occupies residues 174 to 206 (HLDSCLNSPSSPSSSSSPYKNKDNSKSNSLLSF). Low complexity predominate over residues 177–192 (SCLNSPSSPSSSSSPY). Residues 240–274 (YALLSESKIRSKLSEMGLPTDGHKQLLQRRHAKWV) form the SAP domain. The tract at residues 335 to 387 (KQSTTNKNDSLRNTAVESSTEPSTSNGFPATSVSPPLTIDLTNSQTGSDGPQS) is disordered.

It belongs to the RAD18 family. Interacts with E2 ubc2, forming a complex with ubiquitin ligase activity.

It is found in the nucleus. The catalysed reaction is S-ubiquitinyl-[E2 ubiquitin-conjugating enzyme]-L-cysteine + [acceptor protein]-L-lysine = [E2 ubiquitin-conjugating enzyme]-L-cysteine + N(6)-ubiquitinyl-[acceptor protein]-L-lysine.. Its pathway is protein modification; protein ubiquitination. Functionally, E3 RING-finger protein, member of the UBC2/RAD6 epistasis group. Associates to the E2 ubiquitin conjugating enzyme ubc2/rad6 to form the ubc2-rad18 ubiquitin ligase complex involved in postreplicative repair (PRR) of damaged DNA. This Schizosaccharomyces pombe (strain 972 / ATCC 24843) (Fission yeast) protein is Postreplication repair E3 ubiquitin-protein ligase rad18 (rhp18).